Here is a 398-residue protein sequence, read N- to C-terminus: Transcription factor kk1f (398 aa).

The segment at 1–28 (MTFVETVAVPDNEERPSAGHNRPVADST) is disordered. The bZIP domain maps to 31–62 (PNAREMKVQNRVAQRTHHRRLKTKLEVLRERL). Residues 34–50 (REMKVQNRVAQRTHHRR) form a basic motif region. The segment at 51-58 (LKTKLEVL) is leucine-zipper.

This sequence belongs to the bZIP family.

Its subcellular location is the nucleus. It functions in the pathway secondary metabolite biosynthesis. Functionally, transcription factor; part of the gene cluster that mediates the biosynthesis of KK-1, a novel cyclic depsipeptide with 10 residues which is a promising active compound with high activity against many plant pathogens, especially Botrytis cinerea. Positively regulates the expression of all the genes from the KK-1 biosynthesis gene cluster. This is Transcription factor kk1f from Curvularia clavata.